We begin with the raw amino-acid sequence, 1522 residues long: Lysophospholipase NTE1 (1522 aa).

Topologically, residues 1–73 (MVDGTYVNSS…SLLVYLINGT (73 aa)) are lumenal. The chain crosses the membrane as a helical span at residues 74–94 (VPFYLVVLGSVFTPIIVYLIL). Topologically, residues 95-1522 (RSRVLSAYSR…IHLLHRRNSI (1428 aa)) are cytoplasmic. Disordered regions lie at residues 443-468 (SVQE…TPNK), 485-523 (DLLS…ASSP), and 535-556 (SQNF…PSVV). Composition is skewed to low complexity over residues 498 to 511 (KTAS…PRIS) and 540 to 555 (PLSS…KPSV). A nucleoside 3',5'-cyclic phosphate contacts are provided by residues 661 to 782 (PINV…LTKL) and 778 to 918 (TLTK…VAHK). 2 disordered regions span residues 828 to 852 (QKSK…DNQP) and 1125 to 1145 (SSQN…GAPP). Positions 1219 to 1383 (LVLGGGGARG…LDNLPVLEMK (165 aa)) constitute a PNPLA domain. Positions 1223-1228 (GGGARG) match the GXGXXG motif. Residues 1250 to 1254 (GTSIG) carry the GXSXG motif. S1252 serves as the catalytic Nucleophile. Catalysis depends on D1370, which acts as the Proton acceptor. The DGA/G motif lies at 1370 to 1372 (DGG).

Belongs to the NTE family.

It is found in the endoplasmic reticulum membrane. The enzyme catalyses a 1-acyl-sn-glycero-3-phosphocholine + H2O = sn-glycerol 3-phosphocholine + a fatty acid + H(+). Inhibited by organophosphorus esters. Functionally, intracellular phospholipase B that catalyzes the double deacylation of phosphatidylcholine (PC) to glycerophosphocholine (GroPCho). Plays an important role in membrane lipid homeostasis. Responsible for the rapid PC turnover in response to inositol, elevated temperatures, or when choline is present in the growth medium. This Eremothecium gossypii (strain ATCC 10895 / CBS 109.51 / FGSC 9923 / NRRL Y-1056) (Yeast) protein is Lysophospholipase NTE1 (NTE1).